The following is a 255-amino-acid chain: uncharacterized protein (255 aa).

An N-terminal signal peptide occupies residues 1 to 22 (MNILSPIIIIIILIVLFYVMRM).

This is an uncharacterized protein from Acanthamoeba polyphaga (Amoeba).